The following is a 417-amino-acid chain: uncharacterized protein (417 aa).

Disordered stretches follow at residues 1–41 and 233–262; these read MDSE…EDQA and QDSAYNDQAPSTSYHHHHHEQLEAGKSTRS. Positions 31–41 are enriched in basic and acidic residues; it reads DEDHIFHEDQA. The span at 235 to 245 shows a compositional bias: polar residues; sequence SAYNDQAPSTS.

This is an uncharacterized protein from Caenorhabditis elegans.